The chain runs to 267 residues: Matrilysin (267 aa).

Residues 1–20 form the signal peptide; it reads MAAMRLTLFRIVCLLPGCLA. Residues 21–97 constitute a propeptide, activation peptide; the sequence is LPLSQEAGEV…PRCGVPDVAE (77 aa). The short motif at 88-95 is the Cysteine switch element; sequence PRCGVPDV. Zn(2+) is bound at residue Cys-90. Residue Asp-156 participates in Ca(2+) binding. Positions 166 and 168 each coordinate Zn(2+). Ca(2+) contacts are provided by Asp-173, Gly-174, Gly-176, and Thr-178. His-181 contributes to the Zn(2+) binding site. Positions 188, 190, and 192 each coordinate Ca(2+). His-194 provides a ligand contact to Zn(2+). Asp-196 and Glu-199 together coordinate Ca(2+). Zn(2+) is bound at residue His-217. Residue Glu-218 is part of the active site. Positions 221 and 227 each coordinate Zn(2+).

It belongs to the peptidase M10A family. Ca(2+) is required as a cofactor. It depends on Zn(2+) as a cofactor.

Its subcellular location is the secreted. It is found in the extracellular space. The protein localises to the extracellular matrix. It catalyses the reaction Cleavage of 14-Ala-|-Leu-15 and 16-Tyr-|-Leu-17 in B chain of insulin. No action on collagen types I, II, IV, V. Cleaves gelatin chain alpha2(I) &gt; alpha1(I).. Its function is as follows. Degrades casein, gelatins of types I, III, IV, and V, and fibronectin. Activates procollagenase. This chain is Matrilysin (Mmp7), found in Rattus norvegicus (Rat).